The sequence spans 530 residues: Membrane protein insertase YidC (530 aa).

A run of 4 helical transmembrane segments spans residues 5-25 (VVIA…MFPP), 348-368 (YGLA…PLTH), 418-438 (LPML…MFSI), and 492-512 (PVVF…YWLI).

Belongs to the OXA1/ALB3/YidC family. Type 1 subfamily. Interacts with the Sec translocase complex via SecD. Specifically interacts with transmembrane segments of nascent integral membrane proteins during membrane integration.

It is found in the cell inner membrane. Functionally, required for the insertion and/or proper folding and/or complex formation of integral membrane proteins into the membrane. Involved in integration of membrane proteins that insert both dependently and independently of the Sec translocase complex, as well as at least some lipoproteins. Aids folding of multispanning membrane proteins. The chain is Membrane protein insertase YidC from Geotalea daltonii (strain DSM 22248 / JCM 15807 / FRC-32) (Geobacter daltonii).